The primary structure comprises 160 residues: Zinc finger A20 and AN1 domain-containing stress-associated protein 5 (160 aa).

The A20-type zinc finger occupies 20-54; that stretch reads TTTTTLCTNNCGVTANPATNNMCQKCFNASLVSAA. Residues Cys-26, Cys-30, Cys-42, Cys-45, Cys-101, Cys-104, Cys-115, Cys-117, Cys-122, His-125, His-131, and Cys-133 each contribute to the Zn(2+) site. An AN1-type zinc finger spans residues 95–141; sequence QQIVNRCSGCRKKVGLTGFRCRCGELFCSEHRYSDRHDCSYDYKTAG.

May be involved in environmental stress response. This chain is Zinc finger A20 and AN1 domain-containing stress-associated protein 5 (SAP5), found in Arabidopsis thaliana (Mouse-ear cress).